The sequence spans 353 residues: 4-hydroxy-2-oxovalerate aldolase 1 (353 aa).

Positions 14 to 266 constitute a Pyruvate carboxyltransferase domain; it reads VRMTDTSLRD…KTGIDFFDIA (253 aa). Position 22-23 (22-23) interacts with substrate; that stretch reads RD. Position 23 (Asp-23) interacts with Mn(2+). The Proton acceptor role is filled by His-26. Substrate contacts are provided by Ser-176 and His-205. The Mn(2+) site is built by His-205 and His-207. Substrate is bound at residue Tyr-296.

The protein belongs to the 4-hydroxy-2-oxovalerate aldolase family.

It carries out the reaction (S)-4-hydroxy-2-oxopentanoate = acetaldehyde + pyruvate. This Mycobacterium sp. (strain KMS) protein is 4-hydroxy-2-oxovalerate aldolase 1.